Here is a 406-residue protein sequence, read N- to C-terminus: Probable sodium/metabolite cotransporter BASS1, chloroplastic (406 aa).

A chloroplast-targeting transit peptide spans 1–64 (MPLLRRPPAA…RHLCGIPSSR (64 aa)). The next 9 helical transmembrane spans lie at 98-118 (VGEV…AVAL), 123-143 (AFLW…MLGM), 152-172 (LKTA…QYSV), 187-209 (PSYY…SNIV), 217-237 (VALS…LTPL), 252-272 (MGLF…GALL), 278-298 (GLVQ…VAVL), 315-335 (LQVV…GYVL), and 376-396 (VPCA…AGIW).

It belongs to the bile acid:sodium symporter (BASS) (TC 2.A.28) family.

The protein resides in the membrane. It localises to the plastid. It is found in the chloroplast envelope. In terms of biological role, may function as sodium-coupled metabolite transporter across the chloroplast envelope. This is Probable sodium/metabolite cotransporter BASS1, chloroplastic (BASS1) from Oryza sativa subsp. japonica (Rice).